The following is a 615-amino-acid chain: DNA mismatch repair protein MutL (615 aa).

The interval E370–Y397 is disordered. Over residues P378–P391 the composition is skewed to low complexity.

Belongs to the DNA mismatch repair MutL/HexB family.

This protein is involved in the repair of mismatches in DNA. It is required for dam-dependent methyl-directed DNA mismatch repair. May act as a 'molecular matchmaker', a protein that promotes the formation of a stable complex between two or more DNA-binding proteins in an ATP-dependent manner without itself being part of a final effector complex. The chain is DNA mismatch repair protein MutL from Shigella dysenteriae serotype 1 (strain Sd197).